A 445-amino-acid chain; its full sequence is GTPase Der (445 aa).

EngA-type G domains lie at 3–167 (PVIA…NLPD) and 180–353 (IKLA…ASAN). GTP is bound by residues 9-16 (GRPNVGKS), 56-60 (DTGGF), 119-122 (NKAE), 186-193 (GRPNVGKS), 233-237 (DTAGL), and 298-301 (NKWD). The KH-like domain occupies 354 to 438 (RKMSTPVLTR…PLRIQLKSSV (85 aa)).

This sequence belongs to the TRAFAC class TrmE-Era-EngA-EngB-Septin-like GTPase superfamily. EngA (Der) GTPase family. In terms of assembly, associates with the 50S ribosomal subunit.

Functionally, GTPase that plays an essential role in the late steps of ribosome biogenesis. The chain is GTPase Der from Polaromonas naphthalenivorans (strain CJ2).